Here is a 199-residue protein sequence, read N- to C-terminus: Nucleoside triphosphate pyrophosphatase (199 aa).

D76 serves as the catalytic Proton acceptor.

The protein belongs to the Maf family. Requires a divalent metal cation as cofactor.

It localises to the cytoplasm. It catalyses the reaction a ribonucleoside 5'-triphosphate + H2O = a ribonucleoside 5'-phosphate + diphosphate + H(+). The enzyme catalyses a 2'-deoxyribonucleoside 5'-triphosphate + H2O = a 2'-deoxyribonucleoside 5'-phosphate + diphosphate + H(+). Functionally, nucleoside triphosphate pyrophosphatase. May have a dual role in cell division arrest and in preventing the incorporation of modified nucleotides into cellular nucleic acids. This chain is Nucleoside triphosphate pyrophosphatase, found in Ruegeria pomeroyi (strain ATCC 700808 / DSM 15171 / DSS-3) (Silicibacter pomeroyi).